A 479-amino-acid chain; its full sequence is Muscarinic acetylcholine receptor M4 (479 aa).

The Extracellular portion of the chain corresponds to 1–30; it reads MANFTPVNGSSANQSVRLVTTAHNHLETVE. N-linked (GlcNAc...) asparagine glycans are attached at residues N8 and N13. A helical membrane pass occupies residues 31–53; the sequence is MVFIATVTGSLSLVTVVGNILVM. Residues 54–67 are Cytoplasmic-facing; the sequence is LSIKVNRQLQTVNN. A helical transmembrane segment spans residues 68–88; it reads YFLFSLACADLIIGAFSMNLY. Over 89–105 the chain is Extracellular; that stretch reads TLYIIKGYWPLGAVVCD. A disulfide bond links C104 and C184. Residues 106-127 traverse the membrane as a helical segment; sequence LWLALDYVVSNASVMNLLIISF. Residues 128-147 are Cytoplasmic-facing; the sequence is DRYFCVTKPLTYPARRTTKM. Residues 148–170 traverse the membrane as a helical segment; sequence AGLMIAAAWVLSFVLWAPAILFW. The Extracellular segment spans residues 171–192; the sequence is QFVVGKRTVPDNQCFIQFLSNP. A helical transmembrane segment spans residues 193–215; sequence AVTFGTAIAAFYLPVVIMTVLYI. Topologically, residues 216–401 are cytoplasmic; that stretch reads HISLASRSRV…AARERKVTRT (186 aa). The disordered stretch occupies residues 271-334; it reads LEEAPPPALP…APTLQPRTLN (64 aa). Residues 274–285 are compositionally biased toward pro residues; that stretch reads APPPALPPPPRP. A compositionally biased stretch (polar residues) spans 293–303; that stretch reads NESSSGSATQN. Residues 310–333 show a composition bias toward low complexity; sequence TELSTTEAATTPALPAPTLQPRTL. A helical membrane pass occupies residues 402-422; it reads IFAILLAFILTWTPYNVMVLV. Topologically, residues 423 to 436 are extracellular; that stretch reads NTFCQSCIPERVWS. Residues 437–456 traverse the membrane as a helical segment; sequence IGYWLCYVNSTINPACYALC. Residues 457 to 479 are Cytoplasmic-facing; that stretch reads NATFKKTFRHLLLCQYRNIGTAR. A phosphothreonine mark is found at T459, T463, and T477.

The protein belongs to the G-protein coupled receptor 1 family. Muscarinic acetylcholine receptor subfamily. CHRM4 sub-subfamily.

The protein localises to the cell membrane. Its subcellular location is the postsynaptic cell membrane. Its function is as follows. The muscarinic acetylcholine receptor mediates various cellular responses, including inhibition of adenylate cyclase, breakdown of phosphoinositides and modulation of potassium channels through the action of G proteins. Primary transducing effect is inhibition of adenylate cyclase. This is Muscarinic acetylcholine receptor M4 (Chrm4) from Mus musculus (Mouse).